The sequence spans 62 residues: Glucagon (62 aa).

The protein belongs to the glucagon family.

The protein resides in the secreted. In terms of biological role, promotes hydrolysis of glycogen and lipids, and raises the blood sugar level. The protein is Glucagon (gcg) of Scyliorhinus canicula (Small-spotted catshark).